The following is a 105-amino-acid chain: Fungal protease inhibitor-1 (105 aa).

Residues 1 to 19 form the signal peptide; the sequence is MKAVITLLFLACILVVTYG. Cystine bridges form between Cys23-Cys56, Cys28-Cys58, Cys33-Cys59, Cys42-Cys62, Cys72-Cys93, and Cys87-Cys98.

Its function is as follows. Inhibits proteases from the fungi A.oryzae and R.oryzae, trypsin and chymotrypsin. Does not inhibit protease from the bacterium B.licheniformis or papain. The protein is Fungal protease inhibitor-1 of Antheraea mylitta (Tasar silkworm).